The sequence spans 354 residues: NADH-quinone oxidoreductase subunit H (354 aa).

A run of 8 helical transmembrane segments spans residues 25–45 (LVRILVVAVVILLCVAYLILW), 91–111 (WVYLVAPVMVVVPAFAVWAVI), 126–146 (LLYAISISSVGVYGVILAGWA), 170–190 (MGFALVVVMMTAGTMNLSDIV), 205–225 (FLSWNWLPLLPAFVVYFVSGI), 257–277 (LFFLAEYINMIVISALASILF), 290–310 (FIPGIVWLVLKVFLLLSVFIW), and 330–350 (VFLPVTVIWVVVVGFWIMSPL).

Belongs to the complex I subunit 1 family. In terms of assembly, NDH-1 is composed of 14 different subunits. Subunits NuoA, H, J, K, L, M, N constitute the membrane sector of the complex.

Its subcellular location is the cell inner membrane. The enzyme catalyses a quinone + NADH + 5 H(+)(in) = a quinol + NAD(+) + 4 H(+)(out). Functionally, NDH-1 shuttles electrons from NADH, via FMN and iron-sulfur (Fe-S) centers, to quinones in the respiratory chain. The immediate electron acceptor for the enzyme in this species is believed to be ubiquinone. Couples the redox reaction to proton translocation (for every two electrons transferred, four hydrogen ions are translocated across the cytoplasmic membrane), and thus conserves the redox energy in a proton gradient. This subunit may bind ubiquinone. This Paraburkholderia phymatum (strain DSM 17167 / CIP 108236 / LMG 21445 / STM815) (Burkholderia phymatum) protein is NADH-quinone oxidoreductase subunit H.